Reading from the N-terminus, the 70-residue chain is Insulin (70 aa).

3 disulfides stabilise this stretch: Cys-7–Cys-56, Cys-19–Cys-69, and Cys-55–Cys-60. A propeptide spans 33–49 (c peptide); sequence FVDSLAGYSKHQNGGIS.

The protein belongs to the insulin family. In terms of assembly, heterodimer of a B chain and an A chain linked by two disulfide bonds.

It is found in the secreted. Functionally, insulin decreases blood glucose concentration. It increases cell permeability to monosaccharides, amino acids and fatty acids. It accelerates glycolysis, the pentose phosphate cycle, and glycogen synthesis in liver. The chain is Insulin (ins) from Torpedo marmorata (Marbled electric ray).